The chain runs to 88 residues: Small ribosomal subunit protein uS17 (88 aa).

It belongs to the universal ribosomal protein uS17 family. Part of the 30S ribosomal subunit.

One of the primary rRNA binding proteins, it binds specifically to the 5'-end of 16S ribosomal RNA. The sequence is that of Small ribosomal subunit protein uS17 from Xylella fastidiosa (strain M23).